The primary structure comprises 208 residues: Holliday junction branch migration complex subunit RuvA (208 aa).

Positions 1 to 63 (MIGMLTGRVE…QDSVTLYGFL (63 aa)) are domain I. The tract at residues 64–142 (DRDSKRVFLQ…LNQSDDASAG (79 aa)) is domain II. The interval 143 to 151 (NAPYQPTVD) is flexible linker. The interval 151-208 (DAGVEQVVEGLVSLGWRQQDAQRAVNEACAENDVPMPLASDDAPRVLRLALARMDRGR) is domain III.

This sequence belongs to the RuvA family. Homotetramer. Forms an RuvA(8)-RuvB(12)-Holliday junction (HJ) complex. HJ DNA is sandwiched between 2 RuvA tetramers; dsDNA enters through RuvA and exits via RuvB. An RuvB hexamer assembles on each DNA strand where it exits the tetramer. Each RuvB hexamer is contacted by two RuvA subunits (via domain III) on 2 adjacent RuvB subunits; this complex drives branch migration. In the full resolvosome a probable DNA-RuvA(4)-RuvB(12)-RuvC(2) complex forms which resolves the HJ.

The protein resides in the cytoplasm. In terms of biological role, the RuvA-RuvB-RuvC complex processes Holliday junction (HJ) DNA during genetic recombination and DNA repair, while the RuvA-RuvB complex plays an important role in the rescue of blocked DNA replication forks via replication fork reversal (RFR). RuvA specifically binds to HJ cruciform DNA, conferring on it an open structure. The RuvB hexamer acts as an ATP-dependent pump, pulling dsDNA into and through the RuvAB complex. HJ branch migration allows RuvC to scan DNA until it finds its consensus sequence, where it cleaves and resolves the cruciform DNA. This chain is Holliday junction branch migration complex subunit RuvA, found in Bifidobacterium longum subsp. infantis (strain ATCC 15697 / DSM 20088 / JCM 1222 / NCTC 11817 / S12).